The following is a 308-amino-acid chain: Isoaspartyl peptidase/L-asparaginase (308 aa).

Met-1 carries the N-acetylmethionine modification. The Nucleophile role is filled by Thr-168. Substrate contacts are provided by residues 196–199 (RVGD) and 219–222 (TGHG).

Belongs to the Ntn-hydrolase family. In terms of assembly, heterodimer of an alpha and beta chain produced by autocleavage. This heterodimer may then dimerize in turn, giving rise to a heterotetramer. Cleaved into an alpha and beta chain by autocatalysis; this activates the enzyme. The N-terminal residue of the beta subunit is responsible for the nucleophile hydrolase activity. In terms of tissue distribution, expressed in brain, kidney, testis and tissues of the gastrointestinal tract. Present in sperm (at protein level). Over-expressed in uterine, mammary, prostatic and ovarian carcinoma.

The protein resides in the cytoplasm. The enzyme catalyses L-asparagine + H2O = L-aspartate + NH4(+). It carries out the reaction Cleavage of a beta-linked Asp residue from the N-terminus of a polypeptide.. With respect to regulation, glycine accelerates autocleavage into an alpha and beta chain. Has both L-asparaginase and beta-aspartyl peptidase activity. May be involved in the production of L-aspartate, which can act as an excitatory neurotransmitter in some brain regions. Is highly active with L-Asp beta-methyl ester. Besides, has catalytic activity toward beta-aspartyl dipeptides and their methyl esters, including beta-L-Asp-L-Phe, beta-L-Asp-L-Phe methyl ester (aspartame), beta-L-Asp-L-Ala, beta-L-Asp-L-Leu and beta-L-Asp-L-Lys. Does not have aspartylglucosaminidase activity and is inactive toward GlcNAc-L-Asn. Likewise, has no activity toward glutamine. The sequence is that of Isoaspartyl peptidase/L-asparaginase (ASRGL1) from Homo sapiens (Human).